Reading from the N-terminus, the 119-residue chain is Large ribosomal subunit protein uL24 (119 aa).

It belongs to the universal ribosomal protein uL24 family. Part of the 50S ribosomal subunit.

In terms of biological role, one of two assembly initiator proteins, it binds directly to the 5'-end of the 23S rRNA, where it nucleates assembly of the 50S subunit. Functionally, one of the proteins that surrounds the polypeptide exit tunnel on the outside of the subunit. This chain is Large ribosomal subunit protein uL24, found in Leptospira interrogans serogroup Icterohaemorrhagiae serovar copenhageni (strain Fiocruz L1-130).